The following is a 275-amino-acid chain: Putative phosphoenolpyruvate synthase regulatory protein (275 aa).

157-164 (GVSRCGKT) lines the ADP pocket.

The protein belongs to the pyruvate, phosphate/water dikinase regulatory protein family. PSRP subfamily.

The enzyme catalyses [pyruvate, water dikinase] + ADP = [pyruvate, water dikinase]-phosphate + AMP + H(+). It catalyses the reaction [pyruvate, water dikinase]-phosphate + phosphate + H(+) = [pyruvate, water dikinase] + diphosphate. Bifunctional serine/threonine kinase and phosphorylase involved in the regulation of the phosphoenolpyruvate synthase (PEPS) by catalyzing its phosphorylation/dephosphorylation. This is Putative phosphoenolpyruvate synthase regulatory protein from Bordetella pertussis (strain Tohama I / ATCC BAA-589 / NCTC 13251).